We begin with the raw amino-acid sequence, 193 residues long: Small ribosomal subunit protein eS1 (193 aa).

It belongs to the eukaryotic ribosomal protein eS1 family.

The protein is Small ribosomal subunit protein eS1 of Methanobrevibacter smithii (strain ATCC 35061 / DSM 861 / OCM 144 / PS).